The chain runs to 237 residues: Orotidine 5'-phosphate decarboxylase (237 aa).

Residues D11, K34, 61–70 (DLKLHDIPNT), T123, R185, Q194, G214, and R215 contribute to the substrate site. K63 acts as the Proton donor in catalysis.

Belongs to the OMP decarboxylase family. Type 1 subfamily. As to quaternary structure, homodimer.

It catalyses the reaction orotidine 5'-phosphate + H(+) = UMP + CO2. Its pathway is pyrimidine metabolism; UMP biosynthesis via de novo pathway; UMP from orotate: step 2/2. Its function is as follows. Catalyzes the decarboxylation of orotidine 5'-monophosphate (OMP) to uridine 5'-monophosphate (UMP). The protein is Orotidine 5'-phosphate decarboxylase of Ligilactobacillus salivarius (strain UCC118) (Lactobacillus salivarius).